Here is a 166-residue protein sequence, read N- to C-terminus: NADH-ubiquinone oxidoreductase chain 6 (166 aa).

A run of 5 helical transmembrane segments spans residues 1–21 (MMYFVYLLSILLVLGFMAFAS), 26–46 (IYGGLSLVLSGGVGCGIVVSL), 47–67 (GGSFLGLIVFLVYLGGMLVVF), 87–107 (VFTNLLIMVGMLGVIWYYFSG), and 139–159 (CGGWELIFSGWILFLTIFVVL).

The protein belongs to the complex I subunit 6 family. As to quaternary structure, core subunit of respiratory chain NADH dehydrogenase (Complex I) which is composed of 45 different subunits.

The protein resides in the mitochondrion inner membrane. The enzyme catalyses a ubiquinone + NADH + 5 H(+)(in) = a ubiquinol + NAD(+) + 4 H(+)(out). In terms of biological role, core subunit of the mitochondrial membrane respiratory chain NADH dehydrogenase (Complex I) which catalyzes electron transfer from NADH through the respiratory chain, using ubiquinone as an electron acceptor. Essential for the catalytic activity and assembly of complex I. The chain is NADH-ubiquinone oxidoreductase chain 6 (MT-ND6) from Ornithorhynchus anatinus (Duckbill platypus).